A 516-amino-acid polypeptide reads, in one-letter code: Anaerobic nitric oxide reductase transcription regulator NorR (516 aa).

Residue D57 is modified to 4-aspartylphosphate. Positions 187–416 (IIGLSAPMLQ…LEHAIHRAVV (230 aa)) constitute a Sigma-54 factor interaction domain. ATP-binding positions include 215–222 (GETGTGKE) and 278–287 (ADNGTLFLDE). The H-T-H motif DNA-binding region spans 482–501 (WAATARALELDVANLHRLAK).

Its pathway is nitrogen metabolism; nitric oxide reduction. Functionally, required for the expression of anaerobic nitric oxide (NO) reductase, acts as a transcriptional activator for at least the norVW operon. Activation also requires sigma-54. This Klebsiella pneumoniae (strain 342) protein is Anaerobic nitric oxide reductase transcription regulator NorR.